The chain runs to 369 residues: MSILKVIHDRNAGMMPEVYKELTEEEMAGRILKIKKKFGARLFIPGHHYQKDEVIQFADATGDSLQLAQVAQKNKKAEYIVFCGVHFMAETADMLTSDEQIVVLPDMRAGCSMADMANMRQTNRAWEELTKLFGDTVIPLTYVNSTAEIKAFVGRNGGASVTSSNAARMLTWALSQKERILFLPDQHLGRNTAFDLGIPLSRMAVWDPIAEKLEYNGDMKDIIIILWKGHCSVHEKFTVANIKSVKERDPDINVIVHPECTHEVVALSDFSGSTKKIIDSINEAKPGSKWAIGTEMNLVSRIIQEHPDKQIESLNPDMCPCLTMNRIDMPHLLWSLEQIDKGEPTGVIKVDQDIAKDAILALNRMLTIR.

Iminosuccinate-binding residues include His-47 and Ser-64. Cys-111 provides a ligand contact to [4Fe-4S] cluster. Residues 142–144 (YVN) and Ser-163 contribute to the iminosuccinate site. Residue Cys-231 coordinates [4Fe-4S] cluster. Iminosuccinate is bound by residues 257–259 (HPE) and Thr-274. A [4Fe-4S] cluster-binding site is contributed by Cys-321.

The protein belongs to the quinolinate synthase family. Type 3 subfamily. [4Fe-4S] cluster serves as cofactor.

It is found in the cytoplasm. The catalysed reaction is iminosuccinate + dihydroxyacetone phosphate = quinolinate + phosphate + 2 H2O + H(+). The protein operates within cofactor biosynthesis; NAD(+) biosynthesis; quinolinate from iminoaspartate: step 1/1. In terms of biological role, catalyzes the condensation of iminoaspartate with dihydroxyacetone phosphate to form quinolinate. In Bacillus licheniformis (strain ATCC 14580 / DSM 13 / JCM 2505 / CCUG 7422 / NBRC 12200 / NCIMB 9375 / NCTC 10341 / NRRL NRS-1264 / Gibson 46), this protein is Quinolinate synthase.